Here is a 169-residue protein sequence, read N- to C-terminus: NADH-quinone oxidoreductase subunit B (169 aa).

[4Fe-4S] cluster-binding residues include Cys42, Cys43, Cys107, and Cys136.

Belongs to the complex I 20 kDa subunit family. As to quaternary structure, NDH-1 is composed of 14 different subunits. Subunits NuoB, C, D, E, F, and G constitute the peripheral sector of the complex. [4Fe-4S] cluster is required as a cofactor.

The protein localises to the cell inner membrane. The catalysed reaction is a quinone + NADH + 5 H(+)(in) = a quinol + NAD(+) + 4 H(+)(out). In terms of biological role, NDH-1 shuttles electrons from NADH, via FMN and iron-sulfur (Fe-S) centers, to quinones in the respiratory chain. The immediate electron acceptor for the enzyme in this species is believed to be ubiquinone. Couples the redox reaction to proton translocation (for every two electrons transferred, four hydrogen ions are translocated across the cytoplasmic membrane), and thus conserves the redox energy in a proton gradient. The polypeptide is NADH-quinone oxidoreductase subunit B (Wolinella succinogenes (strain ATCC 29543 / DSM 1740 / CCUG 13145 / JCM 31913 / LMG 7466 / NCTC 11488 / FDC 602W) (Vibrio succinogenes)).